Here is a 293-residue protein sequence, read N- to C-terminus: Homoserine kinase (293 aa).

84–94 is a binding site for ATP; that stretch reads PISRGLGSSSA.

Belongs to the GHMP kinase family. Homoserine kinase subfamily.

The protein localises to the cytoplasm. The enzyme catalyses L-homoserine + ATP = O-phospho-L-homoserine + ADP + H(+). Its pathway is amino-acid biosynthesis; L-threonine biosynthesis; L-threonine from L-aspartate: step 4/5. Its function is as follows. Catalyzes the ATP-dependent phosphorylation of L-homoserine to L-homoserine phosphate. The sequence is that of Homoserine kinase from Wolinella succinogenes (strain ATCC 29543 / DSM 1740 / CCUG 13145 / JCM 31913 / LMG 7466 / NCTC 11488 / FDC 602W) (Vibrio succinogenes).